A 155-amino-acid polypeptide reads, in one-letter code: Protein-export protein SecB (155 aa).

Belongs to the SecB family. Homotetramer, a dimer of dimers. One homotetramer interacts with 1 SecA dimer.

The protein resides in the cytoplasm. Its function is as follows. One of the proteins required for the normal export of preproteins out of the cell cytoplasm. It is a molecular chaperone that binds to a subset of precursor proteins, maintaining them in a translocation-competent state. It also specifically binds to its receptor SecA. This chain is Protein-export protein SecB, found in Psychromonas ingrahamii (strain DSM 17664 / CCUG 51855 / 37).